Here is a 265-residue protein sequence, read N- to C-terminus: uncharacterized protein (265 aa).

Glu47 is an active-site residue.

The protein belongs to the PhzF family.

This is an uncharacterized protein from Halalkalibacterium halodurans (strain ATCC BAA-125 / DSM 18197 / FERM 7344 / JCM 9153 / C-125) (Bacillus halodurans).